The chain runs to 56 residues: UPF0391 membrane protein Noc_0484 (56 aa).

The next 2 helical transmembrane spans lie at 6–26 (VTFLIVALVAALLGFTGIAGI) and 29–49 (EIAWILFVVGIILFVVFLVLG).

The protein belongs to the UPF0391 family.

The protein localises to the cell membrane. The polypeptide is UPF0391 membrane protein Noc_0484 (Nitrosococcus oceani (strain ATCC 19707 / BCRC 17464 / JCM 30415 / NCIMB 11848 / C-107)).